The chain runs to 429 residues: Glutamyl-tRNA reductase (429 aa).

Substrate is bound by residues threonine 56–arginine 59, serine 119, glutamate 124–glutamine 126, and glutamine 130. The active-site Nucleophile is cysteine 57. Glycine 199 to isoleucine 204 is a binding site for NADP(+).

This sequence belongs to the glutamyl-tRNA reductase family. In terms of assembly, homodimer.

The enzyme catalyses (S)-4-amino-5-oxopentanoate + tRNA(Glu) + NADP(+) = L-glutamyl-tRNA(Glu) + NADPH + H(+). It participates in porphyrin-containing compound metabolism; protoporphyrin-IX biosynthesis; 5-aminolevulinate from L-glutamyl-tRNA(Glu): step 1/2. Catalyzes the NADPH-dependent reduction of glutamyl-tRNA(Glu) to glutamate 1-semialdehyde (GSA). The sequence is that of Glutamyl-tRNA reductase from Herminiimonas arsenicoxydans.